Consider the following 417-residue polypeptide: Probable sugar-binding periplasmic protein (417 aa).

Residues 1 to 21 form the signal peptide; sequence MLRKLLIGTALATSFAFSAHA.

It belongs to the bacterial solute-binding protein 1 family.

Its subcellular location is the periplasm. In terms of biological role, part of a binding-protein-dependent transport system for a sugar. In Mesorhizobium japonicum (strain LMG 29417 / CECT 9101 / MAFF 303099) (Mesorhizobium loti (strain MAFF 303099)), this protein is Probable sugar-binding periplasmic protein.